Consider the following 1184-residue polypeptide: PR domain zinc finger protein 10 (1184 aa).

The tract at residues 122–162 (LDAKEEEEEEEDEDEDTEEEEEEDAEDTDVDDWQPDPPRPF) is disordered. Residues 125-155 (KEEEEEEEDEDEDTEEEEEEDAEDTDVDDWQ) show a composition bias toward acidic residues. The 119-residue stretch at 202-320 (LPLVLYIDRF…PKQELKVWYA (119 aa)) folds into the SET domain. The tract at residues 221–325 (IPKRTQFGPV…KVWYAASYAE (105 aa)) is N-terminal PR domain; essential for transcriptional activator activity. The segment at 349-371 (WPCYECNRRFISSEQLQQHLNSH) adopts a C2H2-type 1 zinc-finger fold. Residue Lys-374 forms a Glycyl lysine isopeptide (Lys-Gly) (interchain with G-Cter in SUMO2) linkage. Over residues 381–401 (TRGRGRGRGKRRFGPGRRPGR) the composition is skewed to basic residues. Residues 381-405 (TRGRGRGRGKRRFGPGRRPGRPPKF) are disordered. Residue Ser-418 is modified to Phosphoserine. Thr-422 carries the phosphothreonine modification. The tract at residues 444–487 (GLDQPEQASIPIPQLPQETPPSLEQEPETHTLHLQPQQEESLVP) is disordered. The span at 475–487 (LHLQPQQEESLVP) shows a compositional bias: polar residues. C2H2-type zinc fingers lie at residues 520-542 (FKCL…LRFH), 550-572 (LTCD…MKLH), 578-600 (YSCI…VAIH), 606-629 (FTCP…RSFH), 634-656 (YQCT…MLRH), 662-685 (FLCS…QRMH), 717-740 (FKCR…SKRH), and 850-873 (VCCP…RKKH). The interval 917–1164 (QAMTELSQTL…TGPSQQQTTQ (248 aa)) is C-terminal glutamine-rich region; essential for transcriptional activator activity. Residues 1004-1054 (EPAPAAPSASQVAGQPLSPSAQQVQQGLSPSHIQGSSSTQGQALQQQQNSS) form a disordered region. Residues 1014-1036 (QVAGQPLSPSAQQVQQGLSPSHI) are compositionally biased toward polar residues. Residues 1037-1054 (QGSSSTQGQALQQQQNSS) show a composition bias toward low complexity.

Belongs to the class V-like SAM-binding methyltransferase superfamily. In terms of tissue distribution, present in brain, liver, kidney, spleen and thymus (at protein level).

Its subcellular location is the nucleus. In terms of biological role, transcriptional activator, essential for early embryonic development and survival of embryonic stem cells (ESCs). Supports cell growth and survival during early development by transcriptionally activating the expression of the translation initiation factor EIF3B, to sustain global translation. Activates the transcription of FLNC. This Mus musculus (Mouse) protein is PR domain zinc finger protein 10 (Prdm10).